Consider the following 61-residue polypeptide: Large ribosomal subunit protein uL30 (61 aa).

The protein belongs to the universal ribosomal protein uL30 family. As to quaternary structure, part of the 50S ribosomal subunit.

In Petrotoga mobilis (strain DSM 10674 / SJ95), this protein is Large ribosomal subunit protein uL30.